We begin with the raw amino-acid sequence, 433 residues long: Tyrosine--tRNA ligase (433 aa).

Y34 serves as a coordination point for L-tyrosine. The short motif at 39-48 (PTASSLHVGS) is the 'HIGH' region element. Y169 and Q173 together coordinate L-tyrosine. The 'KMSKS' region motif lies at 229-233 (KMGKT). Residue K232 participates in ATP binding. Residues 364 to 432 (IPAFVLFHTV…RYHTIVVRKG (69 aa)) form the S4 RNA-binding domain.

The protein belongs to the class-I aminoacyl-tRNA synthetase family. TyrS type 1 subfamily. In terms of assembly, homodimer.

The protein localises to the cytoplasm. It carries out the reaction tRNA(Tyr) + L-tyrosine + ATP = L-tyrosyl-tRNA(Tyr) + AMP + diphosphate + H(+). In terms of biological role, catalyzes the attachment of tyrosine to tRNA(Tyr) in a two-step reaction: tyrosine is first activated by ATP to form Tyr-AMP and then transferred to the acceptor end of tRNA(Tyr). This Desulfosudis oleivorans (strain DSM 6200 / JCM 39069 / Hxd3) (Desulfococcus oleovorans) protein is Tyrosine--tRNA ligase.